The following is a 460-amino-acid chain: NADH-quinone oxidoreductase subunit N (460 aa).

The next 13 helical transmembrane spans lie at leucine 2–leucine 22, isoleucine 28–serine 48, alanine 65–tyrosine 85, isoleucine 104–phenylalanine 124, phenylalanine 155–phenylalanine 175, leucine 196–alanine 216, proline 230–leucine 250, isoleucine 263–alanine 283, leucine 292–threonine 312, leucine 321–leucine 341, isoleucine 363–phenylalanine 383, leucine 400–isoleucine 420, and tyrosine 438–isoleucine 458.

It belongs to the complex I subunit 2 family. NDH-1 is composed of 14 different subunits. Subunits NuoA, H, J, K, L, M, N constitute the membrane sector of the complex.

Its subcellular location is the cell inner membrane. It carries out the reaction a quinone + NADH + 5 H(+)(in) = a quinol + NAD(+) + 4 H(+)(out). In terms of biological role, NDH-1 shuttles electrons from NADH, via FMN and iron-sulfur (Fe-S) centers, to quinones in the respiratory chain. The immediate electron acceptor for the enzyme in this species is believed to be ubiquinone. Couples the redox reaction to proton translocation (for every two electrons transferred, four hydrogen ions are translocated across the cytoplasmic membrane), and thus conserves the redox energy in a proton gradient. The sequence is that of NADH-quinone oxidoreductase subunit N from Rickettsia bellii (strain RML369-C).